A 322-amino-acid polypeptide reads, in one-letter code: Pantothenate kinase (322 aa).

100–107 is a binding site for ATP; it reads GSVAVGKS.

Belongs to the prokaryotic pantothenate kinase family.

It is found in the cytoplasm. It catalyses the reaction (R)-pantothenate + ATP = (R)-4'-phosphopantothenate + ADP + H(+). Its pathway is cofactor biosynthesis; coenzyme A biosynthesis; CoA from (R)-pantothenate: step 1/5. The sequence is that of Pantothenate kinase from Brucella canis (strain ATCC 23365 / NCTC 10854 / RM-666).